Reading from the N-terminus, the 202-residue chain is FMN-dependent NADH:quinone oxidoreductase 1 (202 aa).

FMN-binding positions include Ser9, 15 to 17 (SAS), 95 to 98 (MYNF), and 139 to 142 (TSGG).

Belongs to the azoreductase type 1 family. Homodimer. FMN serves as cofactor.

The catalysed reaction is 2 a quinone + NADH + H(+) = 2 a 1,4-benzosemiquinone + NAD(+). It carries out the reaction N,N-dimethyl-1,4-phenylenediamine + anthranilate + 2 NAD(+) = 2-(4-dimethylaminophenyl)diazenylbenzoate + 2 NADH + 2 H(+). In terms of biological role, quinone reductase that provides resistance to thiol-specific stress caused by electrophilic quinones. Its function is as follows. Also exhibits azoreductase activity. Catalyzes the reductive cleavage of the azo bond in aromatic azo compounds to the corresponding amines. The chain is FMN-dependent NADH:quinone oxidoreductase 1 from Pseudomonas syringae pv. tomato (strain ATCC BAA-871 / DC3000).